A 337-amino-acid polypeptide reads, in one-letter code: Fructose-1,6-bisphosphatase class 1 (337 aa).

4 residues coordinate Mg(2+): glutamate 89, aspartate 112, leucine 114, and aspartate 115. Residues 115–118, asparagine 208, tyrosine 241, and lysine 271 contribute to the substrate site; that span reads DGSS. Mg(2+) is bound at residue glutamate 277.

It belongs to the FBPase class 1 family. As to quaternary structure, homotetramer. Requires Mg(2+) as cofactor.

The protein resides in the cytoplasm. It catalyses the reaction beta-D-fructose 1,6-bisphosphate + H2O = beta-D-fructose 6-phosphate + phosphate. The protein operates within carbohydrate biosynthesis; gluconeogenesis. The chain is Fructose-1,6-bisphosphatase class 1 from Yersinia pseudotuberculosis serotype O:1b (strain IP 31758).